A 182-amino-acid polypeptide reads, in one-letter code: Transcription termination/antitermination protein NusG (182 aa).

Residues 131–161 (GEVVRVNDGPFADFNGTVEEVDYEKSRLKVS) form the KOW domain.

This sequence belongs to the NusG family.

Functionally, participates in transcription elongation, termination and antitermination. This Vibrio cholerae serotype O1 (strain ATCC 39315 / El Tor Inaba N16961) protein is Transcription termination/antitermination protein NusG.